The primary structure comprises 131 residues: Small ribosomal subunit protein uS8 (131 aa).

It belongs to the universal ribosomal protein uS8 family. Part of the 30S ribosomal subunit. Contacts proteins S5 and S12.

One of the primary rRNA binding proteins, it binds directly to 16S rRNA central domain where it helps coordinate assembly of the platform of the 30S subunit. The chain is Small ribosomal subunit protein uS8 from Burkholderia lata (strain ATCC 17760 / DSM 23089 / LMG 22485 / NCIMB 9086 / R18194 / 383).